Consider the following 208-residue polypeptide: PITH domain-containing protein ZK353.9 (208 aa).

One can recognise a PITH domain in the interval 17–189; sequence EVPGDDVYRY…RIAIATYESR (173 aa).

The protein belongs to the PITHD1 family.

This is PITH domain-containing protein ZK353.9 from Caenorhabditis elegans.